A 496-amino-acid chain; its full sequence is Cobyric acid synthase (496 aa).

Positions 255-445 constitute a GATase cobBQ-type domain; the sequence is DLEIAVLKLP…LHGLLDNGPW (191 aa). Catalysis depends on Cys-336, which acts as the Nucleophile. The active site involves His-437.

Belongs to the CobB/CobQ family. CobQ subfamily.

It participates in cofactor biosynthesis; adenosylcobalamin biosynthesis. In terms of biological role, catalyzes amidations at positions B, D, E, and G on adenosylcobyrinic A,C-diamide. NH(2) groups are provided by glutamine, and one molecule of ATP is hydrogenolyzed for each amidation. The polypeptide is Cobyric acid synthase (Parasynechococcus marenigrum (strain WH8102)).